The following is a 189-amino-acid chain: Large ribosomal subunit protein eL14 (189 aa).

Belongs to the eukaryotic ribosomal protein eL14 family.

In terms of biological role, component of the large ribosomal subunit. The ribosome is a large ribonucleoprotein complex responsible for the synthesis of proteins in the cell. This is Large ribosomal subunit protein eL14 from Trypanosoma brucei brucei.